The primary structure comprises 426 residues: tRNA(Ile)-lysidine synthase (426 aa).

ATP is bound at residue 21–26 (SGGLDS).

It belongs to the tRNA(Ile)-lysidine synthase family.

The protein localises to the cytoplasm. The enzyme catalyses cytidine(34) in tRNA(Ile2) + L-lysine + ATP = lysidine(34) in tRNA(Ile2) + AMP + diphosphate + H(+). Ligates lysine onto the cytidine present at position 34 of the AUA codon-specific tRNA(Ile) that contains the anticodon CAU, in an ATP-dependent manner. Cytidine is converted to lysidine, thus changing the amino acid specificity of the tRNA from methionine to isoleucine. The polypeptide is tRNA(Ile)-lysidine synthase (Enterobacter sp. (strain 638)).